The primary structure comprises 510 residues: uncharacterized protein (510 aa).

The protein to B.subtilis SpoVR.

This is an uncharacterized protein from Escherichia coli (strain K12).